The primary structure comprises 204 residues: Large ribosomal subunit protein uL18 (204 aa).

Belongs to the universal ribosomal protein uL18 family. Part of the 50S ribosomal subunit. Contacts the 5S and 23S rRNAs.

In terms of biological role, this is one of the proteins that bind and probably mediate the attachment of the 5S RNA into the large ribosomal subunit, where it forms part of the central protuberance. The chain is Large ribosomal subunit protein uL18 from Ignicoccus hospitalis (strain KIN4/I / DSM 18386 / JCM 14125).